We begin with the raw amino-acid sequence, 296 residues long: Glycine N-acyltransferase (296 aa).

3 positions are modified to N6-acetyllysine; alternate: lysine 16, lysine 127, and lysine 141. Residues lysine 16, lysine 127, and lysine 141 each carry the N6-succinyllysine; alternate modification. Lysine 159 bears the N6-acetyllysine mark. Lysine 169 carries the post-translational modification N6-succinyllysine. N6-acetyllysine; alternate occurs at positions 183 and 256. Lysine 183 and lysine 256 each carry N6-succinyllysine; alternate.

It belongs to the glycine N-acyltransferase family.

It localises to the mitochondrion. The catalysed reaction is an acyl-CoA + glycine = an N-acylglycine + CoA + H(+). The enzyme catalyses benzoyl-CoA + glycine = N-benzoylglycine + CoA + H(+). Its function is as follows. Mitochondrial acyltransferase which transfers an acyl group to the N-terminus of glycine and glutamine, although much less efficiently. Can conjugate a multitude of substrates to form a variety of N-acylglycines, thereby detoxify xenobiotics, such as benzoic acid or salicylic acid, and endogenous organic acids, such as isovaleric acid. This chain is Glycine N-acyltransferase (GLYAT), found in Pongo abelii (Sumatran orangutan).